We begin with the raw amino-acid sequence, 640 residues long: 1,4-alpha-glucan branching enzyme GlgB (640 aa).

Residue aspartate 318 is the Nucleophile of the active site. Glutamate 371 acts as the Proton donor in catalysis.

It belongs to the glycosyl hydrolase 13 family. GlgB subfamily. In terms of assembly, monomer.

The enzyme catalyses Transfers a segment of a (1-&gt;4)-alpha-D-glucan chain to a primary hydroxy group in a similar glucan chain.. It participates in glycan biosynthesis; glycogen biosynthesis. In terms of biological role, catalyzes the formation of the alpha-1,6-glucosidic linkages in glycogen by scission of a 1,4-alpha-linked oligosaccharide from growing alpha-1,4-glucan chains and the subsequent attachment of the oligosaccharide to the alpha-1,6 position. This is 1,4-alpha-glucan branching enzyme GlgB from Francisella tularensis subsp. novicida (strain U112).